Consider the following 782-residue polypeptide: Hypersensitive to pore-forming toxin protein 40 (782 aa).

The 66-residue stretch at 138–203 (ESEIVPGAMY…TLFVSDQFSI (66 aa)) folds into the Tudor; degenerate domain. Polar residues-rich tracts occupy residues 332 to 346 (SVNP…SSSM) and 413 to 443 (FEST…STIQ). Disordered stretches follow at residues 332 to 351 (SVNP…DCPY), 413 to 448 (FEST…NEED), 472 to 492 (IERP…NMSE), and 617 to 672 (VAQG…LEDP). Positions 617-634 (VAQGSNAPKTAPNDSVNS) are enriched in polar residues. A compositionally biased stretch (basic and acidic residues) spans 638–662 (DDIHETDKRGNHCKSVTEDPKDNKD).

It localises to the cytoplasm. Its subcellular location is the perinuclear region. The polypeptide is Hypersensitive to pore-forming toxin protein 40 (Caenorhabditis elegans).